The primary structure comprises 243 residues: Transmembrane protein 174 (243 aa).

2 helical membrane passes run 40-60 (LLFSGIFLGLVGITFTVMGWI) and 73-93 (LLGPVLLSVGVTFILIAVCKF).

As to quaternary structure, interacts with SLC34A1; regulates SLC34A1 internalization by PTH and FGF23. Predominantly expressed in kidney. Selectively localized in the apical membrane of renal proximal tubule epithelial cells.

It is found in the endoplasmic reticulum membrane. The protein resides in the apical cell membrane. Regulator of plasma phosphate homeostasis. Decreases serum inorganic phosphate (Pi) uptake by regulating the sodium-phosphate cotransporter SLC34A1 trafficking by PTH and FGF23 in the kidney. This Homo sapiens (Human) protein is Transmembrane protein 174 (TMEM174).